A 1071-amino-acid chain; its full sequence is Methionine S-methyltransferase (1071 aa).

Residue Ala-2 is modified to N-acetylalanine.

This sequence belongs to the class I-like SAM-binding methyltransferase superfamily. In terms of assembly, homotetramer. In terms of tissue distribution, expressed in roots, rosette leaves and cauline leaves. Expressed at a lower level in developing seeds.

It localises to the cytoplasm. The enzyme catalyses L-methionine + S-adenosyl-L-methionine = S-methyl-L-methionine + S-adenosyl-L-homocysteine. Functionally, catalyzes the S-methylmethionine (SMM) biosynthesis from adenosyl-L-homocysteine (AdoMet) and methionine. SMM biosynthesis (by MMT1) and degradation (by HMT-1, HMT-2 and HMT-3) constitute the SMM cycle in plants, which is probably required to achieve short term control of AdoMet level. Also able to catalyze the selenium-methylmethionine (SeMM) from AdoMet and selenium-methionine (SeMet). May play a role in phoem sulfur transport; such function is however not essential. This Arabidopsis thaliana (Mouse-ear cress) protein is Methionine S-methyltransferase (MMT1).